We begin with the raw amino-acid sequence, 1233 residues long: Glutamate receptor ionotropic, NMDA 2C (1233 aa).

An N-terminal signal peptide occupies residues 1–19 (MGGALGPALLLTSLFGAWA). Residues 20–554 (GLGPGQGEQG…SAFLEPYSPA (535 aa)) lie on the Extracellular side of the membrane. Residues Asn70 and Asn73 are each glycosylated (N-linked (GlcNAc...) asparagine). Cys82 and Cys317 are joined by a disulfide. N-linked (GlcNAc...) asparagine glycans are attached at residues Asn337 and Asn438. Disulfide bonds link Cys426–Cys453 and Cys433–Cys454. L-glutamate contacts are provided by Ser509, Thr511, and Arg516. An N-linked (GlcNAc...) asparagine glycan is attached at Asn539. The chain crosses the membrane as a helical span at residues 555 to 575 (VWVMMFVMCLTVVAITVFMFE). The Cytoplasmic segment spans residues 576-598 (YFSPVSYNQNLTRGKKSGGPAFT). An intramembrane region (discontinuously helical) is located at residues 599 to 611 (IGKSVWLLWALVF). A pore-forming region spans residues 601 to 620 (KSVWLLWALVFNNSVPIENP). At 612–626 (NNSVPIENPRGTTSK) the chain is on the cytoplasmic side. A helical membrane pass occupies residues 627 to 644 (IMVLVWAFFAVIFLASYT). Residues 645–813 (ANLAAFMIQE…EVMSSKLDID (169 aa)) are Extracellular-facing. Asn685 carries an N-linked (GlcNAc...) asparagine glycan. L-glutamate contacts are provided by Ser687, Thr688, and Asp729. Cys743 and Cys798 form a disulfide bridge. A helical transmembrane segment spans residues 814–836 (NMAGVFYMLLVAMGLALLVFAWE). The Cytoplasmic portion of the chain corresponds to 837–1233 (HLVYWKLRHS…RRISSLESEV (397 aa)). A phosphoserine mark is found at Ser875, Ser881, and Ser912. The segment at 920–994 (IENWGGGRRA…GPPLSDVSRV (75 aa)) is disordered. 2 stretches are compositionally biased toward pro residues: residues 929–956 (APPP…PEPS) and 975–987 (PQPP…PGPP). A PDZ-binding motif is present at residues 1231–1233 (SEV).

The protein belongs to the glutamate-gated ion channel (TC 1.A.10.1) family. NR2C/GRIN2C subfamily. Heterotetramer. Forms heterotetrameric channels composed of two GluN1/zeta subunits (GRIN1), and two identical GluN2/epsilon subunits (GRIN2A, GRIN2B, GRIN2C or GRIN2D) or GluN3 subunits (GRIN3A or GRIN3B) (in vitro). In vivo, the subunit composition may depend on the expression levels of the different subunits. Interacts with PDZ domains of PATJ and DLG4. Interacts (via PDZ-binding motif) with SNX27 (via PDZ domain); the interaction is required for recycling to the plasma membrane when endocytosed and prevent degradation in lysosomes. Mainly expressed in brain with predominant expression is in the cerebellum, also present in the hippocampus, amygdala, caudate nucleus, corpus callosum, subthalamic nuclei and thalamus. Detected in the heart, skeletal muscle and pancreas.

The protein resides in the cell membrane. It is found in the postsynaptic cell membrane. It carries out the reaction Ca(2+)(in) = Ca(2+)(out). It catalyses the reaction Na(+)(in) = Na(+)(out). The enzyme catalyses K(+)(in) = K(+)(out). Its function is as follows. Component of N-methyl-D-aspartate (NMDA) receptors (NMDARs) that function as heterotetrameric, ligand-gated cation channels with high calcium permeability and voltage-dependent block by Mg(2+). Participates in synaptic plasticity for learning and memory formation by contributing to the slow phase of excitatory postsynaptic current and long-term synaptic potentiation. Channel activation requires binding of the neurotransmitter L-glutamate to the GluN2 subunit, glycine or D-serine binding to the GluN1 subunit, plus membrane depolarization to eliminate channel inhibition by Mg(2+). NMDARs mediate simultaneously the potasium efflux and the influx of calcium and sodium. Each GluN2 subunit confers differential attributes to channel properties, including activation, deactivation and desensitization kinetics, pH sensitivity, Ca2(+) permeability, and binding to allosteric modulators. In Homo sapiens (Human), this protein is Glutamate receptor ionotropic, NMDA 2C.